Here is a 184-residue protein sequence, read N- to C-terminus: ATP synthase subunit b, chloroplastic (184 aa).

Residues 27–49 (LATNPINLSVVLGVLIFFGKGVL) traverse the membrane as a helical segment.

It belongs to the ATPase B chain family. In terms of assembly, F-type ATPases have 2 components, F(1) - the catalytic core - and F(0) - the membrane proton channel. F(1) has five subunits: alpha(3), beta(3), gamma(1), delta(1), epsilon(1). F(0) has four main subunits: a(1), b(1), b'(1) and c(10-14). The alpha and beta chains form an alternating ring which encloses part of the gamma chain. F(1) is attached to F(0) by a central stalk formed by the gamma and epsilon chains, while a peripheral stalk is formed by the delta, b and b' chains.

Its subcellular location is the plastid. The protein resides in the chloroplast thylakoid membrane. In terms of biological role, f(1)F(0) ATP synthase produces ATP from ADP in the presence of a proton or sodium gradient. F-type ATPases consist of two structural domains, F(1) containing the extramembraneous catalytic core and F(0) containing the membrane proton channel, linked together by a central stalk and a peripheral stalk. During catalysis, ATP synthesis in the catalytic domain of F(1) is coupled via a rotary mechanism of the central stalk subunits to proton translocation. Functionally, component of the F(0) channel, it forms part of the peripheral stalk, linking F(1) to F(0). In Eucalyptus globulus subsp. globulus (Tasmanian blue gum), this protein is ATP synthase subunit b, chloroplastic.